We begin with the raw amino-acid sequence, 255 residues long: 5'-nucleotidase SurE (255 aa).

A divalent metal cation-binding residues include aspartate 8, aspartate 9, serine 39, and asparagine 91.

It belongs to the SurE nucleotidase family. A divalent metal cation is required as a cofactor.

The protein localises to the cytoplasm. The catalysed reaction is a ribonucleoside 5'-phosphate + H2O = a ribonucleoside + phosphate. Its function is as follows. Nucleotidase that shows phosphatase activity on nucleoside 5'-monophosphates. The protein is 5'-nucleotidase SurE of Acinetobacter baumannii (strain AB0057).